Here is a 358-residue protein sequence, read N- to C-terminus: 5-amino-6-(D-ribitylamino)uracil--L-tyrosine 4-hydroxyphenyl transferase 2 (358 aa).

Residues 45 to 292 (VTFVKNTNIE…ESIKNIQAPR (248 aa)) enclose the Radical SAM core domain. 3 residues coordinate [4Fe-4S] cluster: C59, C63, and C66.

Belongs to the radical SAM superfamily. CofH family. In terms of assembly, consists of two subunits, CofG and CofH. It depends on [4Fe-4S] cluster as a cofactor.

It catalyses the reaction 5-amino-6-(D-ribitylamino)uracil + L-tyrosine + S-adenosyl-L-methionine = 5-amino-5-(4-hydroxybenzyl)-6-(D-ribitylimino)-5,6-dihydrouracil + 2-iminoacetate + 5'-deoxyadenosine + L-methionine + H(+). The protein operates within cofactor biosynthesis; coenzyme F0 biosynthesis. In terms of biological role, catalyzes the radical-mediated synthesis of 5-amino-5-(4-hydroxybenzyl)-6-(D-ribitylimino)-5,6-dihydrouracil from 5-amino-6-(D-ribitylamino)uracil and L-tyrosine. This is 5-amino-6-(D-ribitylamino)uracil--L-tyrosine 4-hydroxyphenyl transferase 2 from Methanococcus maripaludis (strain DSM 14266 / JCM 13030 / NBRC 101832 / S2 / LL).